Consider the following 247-residue polypeptide: Probable phosphatase swp_1620 (247 aa).

His-8, His-10, His-16, His-41, Glu-74, His-102, His-132, Asp-193, and His-195 together coordinate Zn(2+).

It belongs to the PHP family. It depends on Zn(2+) as a cofactor.

The protein is Probable phosphatase swp_1620 of Shewanella piezotolerans (strain WP3 / JCM 13877).